We begin with the raw amino-acid sequence, 80 residues long: Exodeoxyribonuclease 7 small subunit (80 aa).

It belongs to the XseB family. As to quaternary structure, heterooligomer composed of large and small subunits.

The protein localises to the cytoplasm. It carries out the reaction Exonucleolytic cleavage in either 5'- to 3'- or 3'- to 5'-direction to yield nucleoside 5'-phosphates.. Functionally, bidirectionally degrades single-stranded DNA into large acid-insoluble oligonucleotides, which are then degraded further into small acid-soluble oligonucleotides. The protein is Exodeoxyribonuclease 7 small subunit of Erwinia tasmaniensis (strain DSM 17950 / CFBP 7177 / CIP 109463 / NCPPB 4357 / Et1/99).